We begin with the raw amino-acid sequence, 138 residues long: MAKSIPKIGSRKTGRIGSRKHPRKIPKGVIYIQASFNNTIVTVTDVRGRVISWSSAGSCGFKGTRRGTPFAAQTAAGNAIQTVVEQGMQRAEVRIKGPGLGRDAALRAIYRSGILLKVIRDVTPLPHNGCRAPKKRRV.

Residues 1-21 (MAKSIPKIGSRKTGRIGSRKH) form a disordered region. Residues 9 to 21 (GSRKTGRIGSRKH) are compositionally biased toward basic residues.

This sequence belongs to the universal ribosomal protein uS11 family. Part of the 30S ribosomal subunit.

The protein resides in the plastid. It localises to the chloroplast. This Pisum sativum (Garden pea) protein is Small ribosomal subunit protein uS11c.